Consider the following 310-residue polypeptide: Tagatose-6-phosphate kinase (310 aa).

It belongs to the carbohydrate kinase PfkB family. LacC subfamily.

It catalyses the reaction D-tagatofuranose 6-phosphate + ATP = D-tagatofuranose 1,6-bisphosphate + ADP + H(+). It participates in carbohydrate metabolism; D-tagatose 6-phosphate degradation; D-glyceraldehyde 3-phosphate and glycerone phosphate from D-tagatose 6-phosphate: step 1/2. The chain is Tagatose-6-phosphate kinase from Staphylococcus aureus (strain Mu3 / ATCC 700698).